Consider the following 529-residue polypeptide: MATTATCTRFTDDYQLFEELGKGAFSVVRRCVKKTSTQEYAAKIINTKKLSARDHQKLEREARICRLLKHPNIVRLHDSISEEGFHYLVFDLVTGGELFEDIVAREYYSEADASHCIHQILESVNHIHQHDIVHRDLKPENLLLASKCKGAAVKLADFGLAIEVQGEQQAWFGFAGTPGYLSPEVLRKDPYGKPVDIWACGVILYILLVGYPPFWDEDQHKLYQQIKAGAYDFPSPEWDTVTPEAKNLINQMLTINPAKRITADQALKHPWVCQRSTVASMMHRQETVECLRKFNARRKLKGAILTTMLVSRNFSAAKSLLNKKSDGGVKKRKSSSSVHLMPQSNNKNSLVSPAQEPAPLQTAMEPQTTVVHNATDGIKGSTESCNTTTEDEDLKVRKQEIIKITEQLIEAINNGDFEAYTKICDPGLTSFEPEALGNLVEGMDFHKFYFENLLSKNSKPIHTTILNPHVHVIGEDAACIAYIRLTQYIDGQGRPRTSQSEETRVWHRRDGKWLNVHYHCSGAPAAPLQ.

Residues 14-272 (YQLFEELGKG…ADQALKHPWV (259 aa)) form the Protein kinase domain. ATP contacts are provided by residues 20–28 (LGKGAFSVV) and Lys43. Asp136 serves as the catalytic Proton acceptor. The tract at residues 283-292 (HRQETVECLR) is autoinhibitory domain. Residues Thr287, Thr306, and Thr307 each carry the phosphothreonine; by autocatalysis modification. Residues 294 to 316 (FNARRKLKGAILTTMLVSRNFSA) are calmodulin-binding. Ser311, Ser334, Ser349, Ser352, and Ser455 each carry phosphoserine. Residues 324 to 353 (KSDGGVKKRKSSSSVHLMPQSNNKNSLVSP) are disordered. Residues 342–352 (PQSNNKNSLVS) are compositionally biased toward polar residues.

The protein belongs to the protein kinase superfamily. CAMK Ser/Thr protein kinase family. CaMK subfamily. As to quaternary structure, CAMK2 is composed of 4 different chains: alpha (CAMK2A), beta (CAMK2B), gamma (CAMK2G), and delta (CAMK2D). The different isoforms assemble into homo- or heteromultimeric holoenzymes composed of 12 subunits with two hexameric rings stacked one on top of the other. Post-translationally, autophosphorylation of Thr-287 following activation by Ca(2+)/calmodulin. Phosphorylation of Thr-287 locks the kinase into an activated state.

It localises to the sarcoplasmic reticulum membrane. It catalyses the reaction L-seryl-[protein] + ATP = O-phospho-L-seryl-[protein] + ADP + H(+). The enzyme catalyses L-threonyl-[protein] + ATP = O-phospho-L-threonyl-[protein] + ADP + H(+). Its activity is regulated as follows. Activated by Ca(2+)/calmodulin. Binding of calmodulin results in conformational change that relieves intrasteric autoinhibition and allows autophosphorylation of Thr-287 which turns the kinase in a constitutively active form and confers to the kinase a Ca(2+)-independent activity. Calcium/calmodulin-dependent protein kinase that functions autonomously after Ca(2+)/calmodulin-binding and autophosphorylation, and is involved in sarcoplasmic reticulum Ca(2+) transport in skeletal muscle and may function in dendritic spine and synapse formation and neuronal plasticity. In slow-twitch muscles, is involved in regulation of sarcoplasmic reticulum (SR) Ca(2+) transport and in fast-twitch muscle participates in the control of Ca(2+) release from the SR through phosphorylation of the ryanodine receptor-coupling factor triadin. In the central nervous system, it is involved in the regulation of neurite formation and arborization. It may participate in the promotion of dendritic spine and synapse formation and maintenance of synaptic plasticity which enables long-term potentiation (LTP) and hippocampus-dependent learning. In response to interferon-gamma (IFN-gamma) stimulation, catalyzes phosphorylation of STAT1, stimulating the JAK-STAT signaling pathway. This Mus musculus (Mouse) protein is Calcium/calmodulin-dependent protein kinase type II subunit gamma (Camk2g).